The chain runs to 320 residues: Probable arabinan endo-1,5-alpha-L-arabinosidase C (320 aa).

The signal sequence occupies residues 1-16 (MYRSTLLFLFIALVNA). The active-site Proton acceptor is Asp31. 3 N-linked (GlcNAc...) asparagine glycosylation sites follow: Asn73, Asn137, and Asn191. The active-site Proton donor is Glu199.

It belongs to the glycosyl hydrolase 43 family.

Its subcellular location is the secreted. It catalyses the reaction Endohydrolysis of (1-&gt;5)-alpha-arabinofuranosidic linkages in (1-&gt;5)-arabinans.. Its pathway is glycan metabolism; L-arabinan degradation. Its function is as follows. Endo-1,5-alpha-L-arabinanase involved in degradation of pectin. Its preferred substrate is linear 1,5-alpha-L-arabinan. This chain is Probable arabinan endo-1,5-alpha-L-arabinosidase C (abnC), found in Aspergillus terreus (strain NIH 2624 / FGSC A1156).